An 82-amino-acid chain; its full sequence is Exodeoxyribonuclease 7 small subunit (82 aa).

The protein belongs to the XseB family. Heterooligomer composed of large and small subunits.

The protein resides in the cytoplasm. The catalysed reaction is Exonucleolytic cleavage in either 5'- to 3'- or 3'- to 5'-direction to yield nucleoside 5'-phosphates.. In terms of biological role, bidirectionally degrades single-stranded DNA into large acid-insoluble oligonucleotides, which are then degraded further into small acid-soluble oligonucleotides. This Pectobacterium atrosepticum (strain SCRI 1043 / ATCC BAA-672) (Erwinia carotovora subsp. atroseptica) protein is Exodeoxyribonuclease 7 small subunit.